Here is a 468-residue protein sequence, read N- to C-terminus: Squamosa promoter-binding-like protein 5 (468 aa).

The segment at 204–281 (PPRCQAEGCK…TEHNRRRRKP (78 aa)) adopts an SBP-type zinc-finger fold. Positions 207, 212, 229, 232, 248, 251, 255, and 267 each coordinate Zn(2+). A Bipartite nuclear localization signal motif is present at residues 264-280 (KRSCRKRLTEHNRRRRK). 3 disordered regions span residues 270–305 (RLTE…DASI), 354–374 (TLSL…DGGL), and 405–458 (HHHL…SNNN). Residues 363 to 372 (QEEDDEDEDG) show a composition bias toward acidic residues. Over residues 438 to 458 (NNNNILSCSSASDQQNSSNNN) the composition is skewed to low complexity.

Ubiquitous.

The protein resides in the nucleus. Functionally, trans-acting factor that binds specifically to the consensus nucleotide sequence 5'-TNCGTACAA-3'. This chain is Squamosa promoter-binding-like protein 5 (SPL5), found in Oryza sativa subsp. japonica (Rice).